The following is a 199-amino-acid chain: MKQSHFFAHLSRLKLINRWPLMRNVRTENVSEHSLQVAMVAHALAAIKNRKFGGQVNAERIALLAMYHDASEVLTGDLPTPVKYFNSQIAQEYKAIEKIAQQKLVDMVPDELRDIFAPLIDEHAYSEEEKSVVKQADALCAYLKCLEELSAGNNEFLLAKTRLEKTLASRRSEEMDYFMAVFVPSFHLSLDEISQDSPL.

Substrate contacts are provided by residues 18–19 and His-33; that span reads RW. An HD domain is found at 30–142; the sequence is VSEHSLQVAM…VKQADALCAY (113 aa). 3 residues coordinate a divalent metal cation: His-33, His-68, and Asp-69. Residues Asp-69, 77 to 80, and Asp-137 contribute to the substrate site; that span reads DLPT. A divalent metal cation is bound at residue Asp-137.

This sequence belongs to the 5DNU family. As to quaternary structure, homodimer. A divalent metal cation is required as a cofactor.

The protein resides in the cytoplasm. It carries out the reaction a 2'-deoxyribonucleoside 5'-phosphate + H2O = a 2'-deoxyribonucleoside + phosphate. In terms of biological role, catalyzes the strictly specific dephosphorylation of 2'-deoxyribonucleoside 5'-monophosphates. The chain is 5'-deoxynucleotidase CKO_00504 from Citrobacter koseri (strain ATCC BAA-895 / CDC 4225-83 / SGSC4696).